Consider the following 312-residue polypeptide: Small ribosomal subunit biogenesis GTPase RsgA (312 aa).

The CP-type G domain maps to 86 to 245 (QSFLKRPAVA…LADTPGFNRP (160 aa)). GTP-binding positions include 135–138 (TKID) and 187–195 (GPSGVGKTS). Zn(2+)-binding residues include Cys-270, Cys-275, His-277, and Cys-283.

The protein belongs to the TRAFAC class YlqF/YawG GTPase family. RsgA subfamily. In terms of assembly, monomer. Associates with 30S ribosomal subunit, binds 16S rRNA. Requires Zn(2+) as cofactor.

It is found in the cytoplasm. Its function is as follows. One of several proteins that assist in the late maturation steps of the functional core of the 30S ribosomal subunit. Helps release RbfA from mature subunits. May play a role in the assembly of ribosomal proteins into the subunit. Circularly permuted GTPase that catalyzes slow GTP hydrolysis, GTPase activity is stimulated by the 30S ribosomal subunit. The protein is Small ribosomal subunit biogenesis GTPase RsgA of Prochlorococcus marinus (strain NATL2A).